The following is a 481-amino-acid chain: Protein FAM83E (481 aa).

Positions 1–296 are DUF1669; that stretch reads MAASQLAALE…LYAASRPLSA (296 aa). Residues 351 to 481 are disordered; the sequence is KQETPTTTGP…ASGSGSGRRR (131 aa). Residues 371 to 385 show a composition bias toward low complexity; that stretch reads RTRTTSGPPTRPSRS. Polar residues-rich tracts occupy residues 391–400 and 465–474; these read RLSQLSGSSD and NATTSDWASG.

This sequence belongs to the FAM83 family. Directly interacts (via DUF1669) with CSNK1A1, CSNK1A1L, CSNK1D and CSNK1E. May interact with RAF1.

The protein localises to the cytoplasm. It is found in the perinuclear region. May play a role in MAPK signaling. This is Protein FAM83E from Mus musculus (Mouse).